Consider the following 288-residue polypeptide: Ribosome biogenesis GTPase A (288 aa).

The CP-type G domain occupies 14–179 (RRQVTEKLKL…LLDTPGILWP (166 aa)). GTP contacts are provided by residues 58–61 (NKVD), 131–136 (NVGKST), and Gly175.

It belongs to the TRAFAC class YlqF/YawG GTPase family. MTG1 subfamily. In terms of assembly, interacts with ctc. Interacts with the immature 50S ribosome subunit. 2 molecules of rbgA bind to one 50S subunit.

The protein localises to the cytoplasm. Functionally, essential protein that is required for a late step of 50S ribosomal subunit assembly. Has GTPase activity that is stimulated by interaction with the immature 50S ribosome subunit. Binds to the 23S rRNA. Required for the association of ribosomal proteins rplP and rpmA with the large subunit. This chain is Ribosome biogenesis GTPase A, found in Priestia megaterium (strain DSM 319 / IMG 1521) (Bacillus megaterium).